The primary structure comprises 219 residues: Proteasome subunit beta 2 (219 aa).

The propeptide at 1–25 (MAEWIAGGLEGPAGRGLDERVVRSG) is removed in mature form; by autocatalysis. The Nucleophile role is filled by threonine 26.

The protein belongs to the peptidase T1B family. As to quaternary structure, the 20S proteasome core is composed of 14 alpha and 14 beta subunits that assemble into four stacked heptameric rings, resulting in a barrel-shaped structure. The two inner rings, each composed of seven catalytic beta subunits, are sandwiched by two outer rings, each composed of seven alpha subunits. The catalytic chamber with the active sites is on the inside of the barrel. Has a gated structure, the ends of the cylinder being occluded by the N-termini of the alpha-subunits. Is capped at one or both ends by the proteasome regulatory ATPase, PAN.

Its subcellular location is the cytoplasm. It catalyses the reaction Cleavage of peptide bonds with very broad specificity.. Its activity is regulated as follows. The formation of the proteasomal ATPase PAN-20S proteasome complex, via the docking of the C-termini of PAN into the intersubunit pockets in the alpha-rings, triggers opening of the gate for substrate entry. Interconversion between the open-gate and close-gate conformations leads to a dynamic regulation of the 20S proteasome proteolysis activity. Its function is as follows. Component of the proteasome core, a large protease complex with broad specificity involved in protein degradation. The polypeptide is Proteasome subunit beta 2 (Aeropyrum pernix (strain ATCC 700893 / DSM 11879 / JCM 9820 / NBRC 100138 / K1)).